The chain runs to 99 residues: uncharacterized protein (99 aa).

This is an uncharacterized protein from Bacillus subtilis (strain 168).